The primary structure comprises 368 residues: Probable magnesium transporter NIPA3 (368 aa).

The Extracellular portion of the chain corresponds to 1-18 (MASLSGSWRDAYKGMSSD). A helical transmembrane segment spans residues 19–39 (NIKGLVLALSSSLFIGASFIV). The Cytoplasmic segment spans residues 40–66 (KKKGLKRAGASGLRAGSGGYSYLLEPL). A helical membrane pass occupies residues 67–87 (WWVGMITMIVGEIANFAAYAF). The Extracellular segment spans residues 88 to 90 (APA). A helical membrane pass occupies residues 91 to 111 (ILVTPLGALSIIISAALAHVI). Topologically, residues 112–115 (LHEK) are cytoplasmic. Residues 116–136 (LHTFGLLGCVLCVVGSITIVL) form a helical membrane-spanning segment. Residues 137 to 157 (HAPQEQEIDSVLQVWNLATEP) lie on the Extracellular side of the membrane. Residues 158 to 178 (AFLLYAAAVVGAAIILIVQFV) form a helical membrane-spanning segment. Residues 179 to 189 (PQYGQSHVMVY) lie on the Cytoplasmic side of the membrane. A helical membrane pass occupies residues 190–210 (IGVCSLVGSLSVMSVKALGIA). Residues 211-220 (LKLTFSGMNQ) are Extracellular-facing. The chain crosses the membrane as a helical span at residues 221–241 (LIYPQTWVFTLIVLTCVITQM). At 242-255 (NYLNKALDTFNTAV) the chain is on the cytoplasmic side. A helical transmembrane segment spans residues 256 to 276 (VSPIYYVMFTSLTILASVIMF). Residues 277–283 (KDWDRQD) lie on the Extracellular side of the membrane. The helical transmembrane segment at 284 to 304 (GTQIVTELCGFVTILSGTFLL) threads the bilayer. The Cytoplasmic segment spans residues 305 to 368 (HKTKDMVDGS…ILPQDGPEAV (64 aa)).

The protein belongs to the NIPA (TC 2.A.7) family. Homodimer.

It localises to the cell membrane. The protein resides in the early endosome. In terms of biological role, acts as a Mg(2+) transporter. Can also transport other divalent cations such as Fe(2+), Sr(2+), Ba(2+), Mn(2+) and Co(2+) but to a much less extent than Mg(2+). This is Probable magnesium transporter NIPA3 from Arabidopsis thaliana (Mouse-ear cress).